The following is a 602-amino-acid chain: Alpha-(1-&gt;6)-mannopyranosyltransferase B (602 aa).

13 helical membrane passes run 105 to 125 (IGTM…ALPV), 148 to 168 (MIVL…APLV), 190 to 210 (TFGA…QDIY), 244 to 264 (VPFI…SIAA), 274 to 294 (IVGG…AAGW), 320 to 340 (LILH…FLLV), 368 to 388 (GVLI…LGFV), 404 to 424 (VVAI…TVVV), 448 to 468 (WMSM…NLGL), 472 to 492 (TAAM…AFMV), 503 to 523 (IHAV…FPVV), 546 to 566 (LGVI…GLAL), and 571 to 591 (VFSI…VGWW).

Belongs to the MptA/B family.

It localises to the membrane. The protein operates within cell wall biogenesis; cell wall polysaccharide biosynthesis. In terms of biological role, involved in the initiation of core alpha-(1-&gt;6) mannan biosynthesis of lipomannan (LM-A) and multi-mannosylated polymer (LM-B), extending triacylatedphosphatidyl-myo-inositol dimannoside (Ac1PIM2) and mannosylated glycolipid, 1,2-di-O-C16/C18:1-(alpha-D-mannopyranosyl)-(1-&gt;4)-(alpha-D-glucopyranosyluronic acid)-(1-&gt;3)-glycerol (Man1GlcAGroAc2), respectively. Catalyzes the addition of alpha-(1-&gt;6)-mannose residue. This Corynebacterium glutamicum (strain ATCC 13032 / DSM 20300 / JCM 1318 / BCRC 11384 / CCUG 27702 / LMG 3730 / NBRC 12168 / NCIMB 10025 / NRRL B-2784 / 534) protein is Alpha-(1-&gt;6)-mannopyranosyltransferase B (mptB).